The sequence spans 468 residues: 6-phospho-beta-galactosidase (468 aa).

5 residues coordinate D-galactose 6-phosphate: Q19, H116, N159, E160, and N297. The active-site Proton donor is the E160. The active-site Nucleophile is E375. Positions 428, 429, 435, and 437 each coordinate D-galactose 6-phosphate.

The protein belongs to the glycosyl hydrolase 1 family.

It catalyses the reaction a 6-phospho-beta-D-galactoside + H2O = D-galactose 6-phosphate + an alcohol. Its pathway is carbohydrate metabolism; lactose degradation; D-galactose 6-phosphate and beta-D-glucose from lactose 6-phosphate: step 1/1. This Streptococcus uberis (strain ATCC BAA-854 / 0140J) protein is 6-phospho-beta-galactosidase.